A 151-amino-acid chain; its full sequence is Phosphopantetheine adenylyltransferase (151 aa).

T9 serves as a coordination point for substrate. ATP-binding positions include 9–10 and H17; that span reads TF. Substrate is bound by residues K41, T73, and R87. Residues 88–90, E98, and 122–128 contribute to the ATP site; these read GIR and LTSISST.

It belongs to the bacterial CoaD family. In terms of assembly, homohexamer. The cofactor is Mg(2+).

The protein resides in the cytoplasm. The enzyme catalyses (R)-4'-phosphopantetheine + ATP + H(+) = 3'-dephospho-CoA + diphosphate. It participates in cofactor biosynthesis; coenzyme A biosynthesis; CoA from (R)-pantothenate: step 4/5. Its function is as follows. Reversibly transfers an adenylyl group from ATP to 4'-phosphopantetheine, yielding dephospho-CoA (dPCoA) and pyrophosphate. The sequence is that of Phosphopantetheine adenylyltransferase from Phocaeicola vulgatus (strain ATCC 8482 / DSM 1447 / JCM 5826 / CCUG 4940 / NBRC 14291 / NCTC 11154) (Bacteroides vulgatus).